The following is an 837-amino-acid chain: MKLNRRDFIKANAAAAAISAAGLSVPGAAVAQGKDEIRWDKAACRFCGTGCGVLVGTQDGRVVATQGDPDAPVNRGLNCIKGYFLSKIMYGADRLKTPMLRMKDGKYDKNGEFTPISWTKAFDIMEEKAKATMKAKGPNGLAMFGSGQWTIWEGYAASKLMKAGFRTNNLDPNARHCMASAVAGFMRTFGIDEPMGCYDDIEHADAFVLWGSNMAEMHPILWTRITDRKLSNKGVKVAVLSTFEHRSYELADIPMIFTPQTDLAILNYIANYIIQNGKVNQAFVDKNVNFKKSATDIGYGLRPTHALEKNATSNGYPDADGKPKGDTGKSDPITFDEFKKFVSEYTVEKVSKLSGVAEKDLKALAELYADPKVKVISFWTMGFNQHTRGTWANNLCYNIHLLTGKISEPGNSPFSLTGQPSACGTAREVGTFSHRLPADMVVTNPEHRKHTEELWGLPEGTIPDKVGYHAVAMARALKDGKVNFYWQQCNNNMQAGPNINEELYPGWRKPENFIVVSDPYPTVSAMAADLILPTAMWVEKEGAYGNAERRTQFWRQQVKAPGEARSDLWQLMEFSKRFKVEEVWPAELVAKAPKLKGKTLFDVLYANGVVNKYKLNETAAGFDNDDSKLIGFYIQKGLFEEYASFGRGHGHDLAPFDSYHQARGLRWPVVGGKETLWRFREGYDPYVKKGEGVKFYGHKDGKAVIFALPYQPPAESPDKEFDMWLSTGRVLEHWHTGTMTRRVPELYKAFPDAVVFMHPDDAKARGLQRGMEVKVASRRGEIQLRVETRGRNKPPRGLVFIPFFDAGRLVNKLTLDATCPISKETDYKKCAVKVTKV.

Positions Met-1 to Ala-31 form a signal peptide, tat-type signal. The region spanning Ile-37–Asp-93 is the 4Fe-4S Mo/W bis-MGD-type domain. [4Fe-4S] cluster-binding residues include Cys-44, Cys-47, Cys-51, and Cys-79. Mo-bis(molybdopterin guanine dinucleotide)-binding positions include Lys-81, Gln-148, Asn-173, Cys-177, Trp-210–Met-217, Ser-241–His-245, and Gln-260–Asp-262. A disordered region spans residues Glu-308–Lys-329. The segment covering Ala-319–Lys-329 has biased composition (basic and acidic residues). Mo-bis(molybdopterin guanine dinucleotide)-binding positions include Met-381, Gln-385, Asn-491, Ser-517–Asp-518, Lys-540, Asp-567, and Thr-727–Thr-736. Phe-803 serves as a coordination point for substrate. Mo-bis(molybdopterin guanine dinucleotide) contacts are provided by Asn-811 and Lys-828.

This sequence belongs to the prokaryotic molybdopterin-containing oxidoreductase family. NasA/NapA/NarB subfamily. In terms of assembly, component of the periplasmic nitrate reductase NapAB complex composed of NapA and NapB. [4Fe-4S] cluster serves as cofactor. Requires Mo-bis(molybdopterin guanine dinucleotide) as cofactor. Predicted to be exported by the Tat system. The position of the signal peptide cleavage has not been experimentally proven.

Its subcellular location is the periplasm. The catalysed reaction is 2 Fe(II)-[cytochrome] + nitrate + 2 H(+) = 2 Fe(III)-[cytochrome] + nitrite + H2O. Its function is as follows. Catalytic subunit of the periplasmic nitrate reductase complex NapAB. Receives electrons from NapB and catalyzes the reduction of nitrate to nitrite. The polypeptide is Periplasmic nitrate reductase (Dechloromonas aromatica (strain RCB)).